The chain runs to 426 residues: Glutamate-1-semialdehyde 2,1-aminomutase (426 aa).

At lysine 263 the chain carries N6-(pyridoxal phosphate)lysine.

The protein belongs to the class-III pyridoxal-phosphate-dependent aminotransferase family. HemL subfamily. Homodimer. It depends on pyridoxal 5'-phosphate as a cofactor.

The protein resides in the cytoplasm. The enzyme catalyses (S)-4-amino-5-oxopentanoate = 5-aminolevulinate. Its pathway is porphyrin-containing compound metabolism; protoporphyrin-IX biosynthesis; 5-aminolevulinate from L-glutamyl-tRNA(Glu): step 2/2. This chain is Glutamate-1-semialdehyde 2,1-aminomutase, found in Caldicellulosiruptor bescii (strain ATCC BAA-1888 / DSM 6725 / KCTC 15123 / Z-1320) (Anaerocellum thermophilum).